Consider the following 458-residue polypeptide: UDP-N-acetylmuramoylalanine--D-glutamate ligase (458 aa).

Residue 124 to 130 participates in ATP binding; sequence GSDGKTT.

It belongs to the MurCDEF family.

It localises to the cytoplasm. The enzyme catalyses UDP-N-acetyl-alpha-D-muramoyl-L-alanine + D-glutamate + ATP = UDP-N-acetyl-alpha-D-muramoyl-L-alanyl-D-glutamate + ADP + phosphate + H(+). It functions in the pathway cell wall biogenesis; peptidoglycan biosynthesis. Functionally, cell wall formation. Catalyzes the addition of glutamate to the nucleotide precursor UDP-N-acetylmuramoyl-L-alanine (UMA). The protein is UDP-N-acetylmuramoylalanine--D-glutamate ligase of Clostridium tetani (strain Massachusetts / E88).